A 256-amino-acid chain; its full sequence is uncharacterized protein (256 aa).

An N-terminal signal peptide occupies residues 1–22 (MKSIKRIGLCISLLILSIFVTS). Cys-23 carries N-palmitoyl cysteine lipidation. A lipid anchor (S-diacylglycerol cysteine) is attached at Cys-23.

This sequence belongs to the staphylococcal tandem lipoprotein family.

It is found in the cell membrane. This is an uncharacterized protein from Staphylococcus aureus (strain USA300).